Here is an 81-residue protein sequence, read N- to C-terminus: RNA-binding protein Hfq (81 aa).

The 60-residue stretch at aspartate 9–valine 68 folds into the Sm domain.

It belongs to the Hfq family. Homohexamer.

RNA chaperone that binds small regulatory RNA (sRNAs) and mRNAs to facilitate mRNA translational regulation in response to envelope stress, environmental stress and changes in metabolite concentrations. Also binds with high specificity to tRNAs. This is RNA-binding protein Hfq from Blochmanniella pennsylvanica (strain BPEN).